A 293-amino-acid polypeptide reads, in one-letter code: Elongation factor P--(R)-beta-lysine ligase homolog (293 aa).

ATP is bound by residues R86–N88, E223–L224, and G272.

It belongs to the class-II aminoacyl-tRNA synthetase family. EpmA subfamily. Homodimer.

The chain is Elongation factor P--(R)-beta-lysine ligase homolog (genX) from Aquifex aeolicus (strain VF5).